The sequence spans 252 residues: 2-succinyl-6-hydroxy-2,4-cyclohexadiene-1-carboxylate synthase (252 aa).

It belongs to the AB hydrolase superfamily. MenH family. Monomer.

It catalyses the reaction 5-enolpyruvoyl-6-hydroxy-2-succinyl-cyclohex-3-ene-1-carboxylate = (1R,6R)-6-hydroxy-2-succinyl-cyclohexa-2,4-diene-1-carboxylate + pyruvate. It participates in quinol/quinone metabolism; 1,4-dihydroxy-2-naphthoate biosynthesis; 1,4-dihydroxy-2-naphthoate from chorismate: step 3/7. It functions in the pathway quinol/quinone metabolism; menaquinone biosynthesis. Functionally, catalyzes a proton abstraction reaction that results in 2,5-elimination of pyruvate from 2-succinyl-5-enolpyruvyl-6-hydroxy-3-cyclohexene-1-carboxylate (SEPHCHC) and the formation of 2-succinyl-6-hydroxy-2,4-cyclohexadiene-1-carboxylate (SHCHC). This Shigella dysenteriae serotype 1 (strain Sd197) protein is 2-succinyl-6-hydroxy-2,4-cyclohexadiene-1-carboxylate synthase.